We begin with the raw amino-acid sequence, 246 residues long: Flagellar L-ring protein (246 aa).

The N-terminal stretch at 1–20 is a signal peptide; sequence MMQKCLSPKTLIAALVVLSA. Cys21 carries N-palmitoyl cysteine lipidation. Cys21 carries the S-diacylglycerol cysteine lipid modification.

It belongs to the FlgH family. As to quaternary structure, the basal body constitutes a major portion of the flagellar organelle and consists of four rings (L,P,S, and M) mounted on a central rod.

It localises to the cell outer membrane. The protein resides in the bacterial flagellum basal body. In terms of biological role, assembles around the rod to form the L-ring and probably protects the motor/basal body from shearing forces during rotation. This is Flagellar L-ring protein from Ruegeria pomeroyi (strain ATCC 700808 / DSM 15171 / DSS-3) (Silicibacter pomeroyi).